Here is a 122-residue protein sequence, read N- to C-terminus: Crustacean hyperglycemic hormones 7 (122 aa).

Positions 1 to 26 (MSLAMTAFRMMAVALVVVVASSTTWA) are cleaved as a signal peptide. Intrachain disulfides connect C55-C91, C71-C87, and C74-C100. Residue V120 is modified to Valine amide.

This sequence belongs to the arthropod CHH/MIH/GIH/VIH hormone family. Produced by the medulla terminalis X-organ in the eyestalks and transported to the sinus gland where they are stored and released.

It localises to the secreted. Its function is as follows. Hormone found in the sinus gland of isopods and decapods which controls the blood sugar level. Has a secretagogue action over the amylase released from the midgut gland. May act as a stress hormone and may be involved in the control of molting and reproduction. This Penaeus japonicus (Kuruma prawn) protein is Crustacean hyperglycemic hormones 7.